Consider the following 429-residue polypeptide: Bifunctional protein GlmU (429 aa).

Positions 1-223 (MKTSILILAA…EDEFMGINDK (223 aa)) are pyrophosphorylase. UDP-N-acetyl-alpha-D-glucosamine contacts are provided by residues 8–11 (LAAG), K22, and 81–82 (GT). D102 provides a ligand contact to Mg(2+). 4 residues coordinate UDP-N-acetyl-alpha-D-glucosamine: G135, E149, N164, and N221. Mg(2+) is bound at residue N221. Positions 224 to 244 (FELSIAENFMQEKIKKYWMQQ) are linker. Positions 245–429 (GVIFHLPQST…KDYYYKKFQK (185 aa)) are N-acetyltransferase. UDP-N-acetyl-alpha-D-glucosamine contacts are provided by R308 and K325. H336 (proton acceptor) is an active-site residue. 2 residues coordinate UDP-N-acetyl-alpha-D-glucosamine: Y339 and N350. Acetyl-CoA contacts are provided by residues 359–360 (NY), S378, A396, and R413.

It in the N-terminal section; belongs to the N-acetylglucosamine-1-phosphate uridyltransferase family. In the C-terminal section; belongs to the transferase hexapeptide repeat family. Homotrimer. It depends on Mg(2+) as a cofactor.

Its subcellular location is the cytoplasm. It carries out the reaction alpha-D-glucosamine 1-phosphate + acetyl-CoA = N-acetyl-alpha-D-glucosamine 1-phosphate + CoA + H(+). The catalysed reaction is N-acetyl-alpha-D-glucosamine 1-phosphate + UTP + H(+) = UDP-N-acetyl-alpha-D-glucosamine + diphosphate. The protein operates within nucleotide-sugar biosynthesis; UDP-N-acetyl-alpha-D-glucosamine biosynthesis; N-acetyl-alpha-D-glucosamine 1-phosphate from alpha-D-glucosamine 6-phosphate (route II): step 2/2. It functions in the pathway nucleotide-sugar biosynthesis; UDP-N-acetyl-alpha-D-glucosamine biosynthesis; UDP-N-acetyl-alpha-D-glucosamine from N-acetyl-alpha-D-glucosamine 1-phosphate: step 1/1. Its pathway is bacterial outer membrane biogenesis; LPS lipid A biosynthesis. In terms of biological role, catalyzes the last two sequential reactions in the de novo biosynthetic pathway for UDP-N-acetylglucosamine (UDP-GlcNAc). The C-terminal domain catalyzes the transfer of acetyl group from acetyl coenzyme A to glucosamine-1-phosphate (GlcN-1-P) to produce N-acetylglucosamine-1-phosphate (GlcNAc-1-P), which is converted into UDP-GlcNAc by the transfer of uridine 5-monophosphate (from uridine 5-triphosphate), a reaction catalyzed by the N-terminal domain. In Campylobacter jejuni subsp. jejuni serotype O:23/36 (strain 81-176), this protein is Bifunctional protein GlmU.